The sequence spans 1091 residues: Sodium/potassium exporting P-type ATPase 1 (1091 aa).

Residues 1–63 (MGEGTTKENN…LGDDTKIDYK (63 aa)) are Cytoplasmic-facing. A helical membrane pass occupies residues 64–84 (AMVLHQVCNAMIMVLLISMII). At 85–90 (SFAMHD) the chain is on the extracellular side. A helical membrane pass occupies residues 91–111 (WITGGVISFVIAVNVLIGLVQ). Over 112-282 (EYKATKTMNS…TNVGTPLHRK (171 aa)) the chain is Cytoplasmic. A helical transmembrane segment spans residues 283–303 (LSKLAVLLFWIAVLFAIIVMA). The Extracellular segment spans residues 304-312 (SQKFDVDKR). A helical transmembrane segment spans residues 313–333 (VAIYAICVALSMIPSSLVVVL). Residues 334–815 (TITMSVGAAV…RRMTDNIQKF (482 aa)) are Cytoplasmic-facing. Residue D369 is the 4-aspartylphosphate intermediate of the active site. D369 and T371 together coordinate Mg(2+). Residues T371 and E483 each coordinate ATP. The interval 499–525 (ALTGEKSTNQSNENDQSSLSQHNEKPG) is disordered. Residues 503–519 (EKSTNQSNENDQSSLSQ) are compositionally biased toward polar residues. 7 residues coordinate ATP: K561, R606, T673, G674, D675, R732, and K738. D757 contributes to the Mg(2+) binding site. N760 serves as a coordination point for ATP. The chain crosses the membrane as a helical span at residues 816–836 (VLQLLAENVAQALYLIIGLVF). Residues 837-848 (RDENGKSVFPLS) are Extracellular-facing. The chain crosses the membrane as a helical span at residues 849–869 (PVEVLWIIVVTSCFPAMGLGL). Over 870-885 (EKAAPDLMDRPPHDSE) the chain is Cytoplasmic. A helical transmembrane segment spans residues 886-906 (VGIFTWEVIIDTFAYGIIMTG). At 907–943 (SCMASFTGSLYGINSGRLGHDCDGTYNSSCRDVYRSR) the chain is on the extracellular side. The chain crosses the membrane as a helical span at residues 944–964 (SAAFATMTWCALILAWEVVDM). Residues 965–991 (RRSFFRMHPDTDSPVKEFFRSIWGNQF) lie on the Cytoplasmic side of the membrane. A helical transmembrane segment spans residues 992 to 1012 (LFWSIIFGFVSAFPVVYIPVI). The Extracellular portion of the chain corresponds to 1013–1021 (NDKVFLHKP). A helical transmembrane segment spans residues 1022 to 1042 (IGAEWGLAIAFTIAFWIGAEL). At 1043 to 1091 (YKCGKRRYFKTQRAHNPENDLESNNKRDPFEAYSTSTTIHTEVNIGIKQ) the chain is on the cytoplasmic side.

It belongs to the cation transport ATPase (P-type) (TC 3.A.3) family. Type IID subfamily. Mg(2+) is required as a cofactor. The active site is phosphorylated in presence of sodium or potassium and in conditions of higher pH. Not phosphorylated in presence of calcium ions.

It localises to the cell membrane. It carries out the reaction Na(+)(in) + ATP + H2O = Na(+)(out) + ADP + phosphate + H(+). It catalyses the reaction K(+)(in) + ATP + H2O = K(+)(out) + ADP + phosphate + H(+). In terms of biological role, catalyzes the hydrolysis of ATP coupled with the export of sodium and potassium from the cell. May export potassium less efficiently. May transport other cations such as lithium. Sodium/potassium efflux ATPases are involved in salt tolerance and maintaining the membrane potential across the plasma membrane in high salinity (Na+) or alkaline (K+) environments. Is negatively modulated by SIS2/HAL3. In Saccharomyces cerevisiae (strain ATCC 204508 / S288c) (Baker's yeast), this protein is Sodium/potassium exporting P-type ATPase 1.